The chain runs to 491 residues: Aspartyl/glutamyl-tRNA(Asn/Gln) amidotransferase subunit B (491 aa).

This sequence belongs to the GatB/GatE family. GatB subfamily. Heterotrimer of A, B and C subunits.

The enzyme catalyses L-glutamyl-tRNA(Gln) + L-glutamine + ATP + H2O = L-glutaminyl-tRNA(Gln) + L-glutamate + ADP + phosphate + H(+). It carries out the reaction L-aspartyl-tRNA(Asn) + L-glutamine + ATP + H2O = L-asparaginyl-tRNA(Asn) + L-glutamate + ADP + phosphate + 2 H(+). Functionally, allows the formation of correctly charged Asn-tRNA(Asn) or Gln-tRNA(Gln) through the transamidation of misacylated Asp-tRNA(Asn) or Glu-tRNA(Gln) in organisms which lack either or both of asparaginyl-tRNA or glutaminyl-tRNA synthetases. The reaction takes place in the presence of glutamine and ATP through an activated phospho-Asp-tRNA(Asn) or phospho-Glu-tRNA(Gln). The protein is Aspartyl/glutamyl-tRNA(Asn/Gln) amidotransferase subunit B of Parasynechococcus marenigrum (strain WH8102).